A 277-amino-acid chain; its full sequence is S-formylglutathione hydrolase FrmB (277 aa).

Active-site charge relay system residues include Ser145, Asp221, and His254.

It belongs to the esterase D family.

The catalysed reaction is S-formylglutathione + H2O = formate + glutathione + H(+). Functionally, serine hydrolase involved in the detoxification of formaldehyde. Hydrolyzes S-formylglutathione to glutathione and formate. The protein is S-formylglutathione hydrolase FrmB (frmB) of Escherichia coli O157:H7.